The chain runs to 86 residues: Probable weak neurotoxin NNAM2 (86 aa).

The N-terminal stretch at 1 to 21 (MKTLLLTLVVVTIVCLDLGYT) is a signal peptide. Disulfide bonds link Cys24/Cys45, Cys27/Cys32, Cys38/Cys63, Cys67/Cys78, and Cys79/Cys84.

The protein belongs to the three-finger toxin family. Ancestral subfamily. Orphan group II sub-subfamily. In terms of tissue distribution, expressed by the venom gland.

The protein resides in the secreted. Its function is as follows. Binds with low affinity to muscular (alpha-1-beta-1-delta-epsilon/CHRNA1-CHRNB1-CHRND-CHRNE) and very low affinity to neuronal (alpha-7/CHRNA7) nicotinic acetylcholine receptor (nAChR). The chain is Probable weak neurotoxin NNAM2 from Naja atra (Chinese cobra).